The chain runs to 543 residues: Malate synthase (543 aa).

Belongs to the malate synthase family. In terms of assembly, homodimer.

Its subcellular location is the cytoplasm. The enzyme catalyses glyoxylate + acetyl-CoA + H2O = (S)-malate + CoA + H(+). It functions in the pathway carbohydrate metabolism; glyoxylate cycle; (S)-malate from isocitrate: step 2/2. In Streptomyces arenae, this protein is Malate synthase (aceB).